A 629-amino-acid polypeptide reads, in one-letter code: Transmembrane 9 superfamily protein C1105.08 (629 aa).

The N-terminal stretch at 1–26 (MLLPSIPSCSFSFVVFVSVLLQTCFS) is a signal peptide. The Lumenal segment spans residues 27–266 (FQLTPLSPKN…MHIESRQIRW (240 aa)). Residue Asn-157 is glycosylated (N-linked (GlcNAc...) asparagine). A helical transmembrane segment spans residues 267 to 287 (IFIIHSAIIDTFLIFVVSIIL). The Cytoplasmic portion of the chain corresponds to 288–337 (YRTLNRDINKYNSAFVDQEDVQEDFGWKLVHGDVFRPPRRPMLFSILLGT). Residues 338–358 (GAQLLFMSSGIVLFAIFGIVA) traverse the membrane as a helical segment. Topologically, residues 359–364 (PSRRGS) are lumenal. Residues 365–385 (LATATVALFIISGFVSGYVSA) form a helical membrane-spanning segment. Residues 386-401 (LSYKLMQGMLRKRNLL) are Cytoplasmic-facing. Residues 402 to 422 (LTPFVVPGFMLAAALFFNMVF) traverse the membrane as a helical segment. Residues 423 to 436 (WSKSSSSTVPFSSW) are Lumenal-facing. Residues 437–457 (LLLIFLYLLFTVPLSFVGSLI) traverse the membrane as a helical segment. Residues 458 to 488 (GFRSREFVPPVRTNQIPRQIPSHSIWLSSFP) are Cytoplasmic-facing. Residues 489-509 (SAIIGGSIPFLVILIELFSIL) form a helical membrane-spanning segment. At 510-519 (DSLWFHPLYF) the chain is on the lumenal side. A helical transmembrane segment spans residues 520–544 (MFGFSFFCFGILVTTCIMVSIITVY). At 545-558 (FQLCSENYNWWWRS) the chain is on the cytoplasmic side. The helical transmembrane segment at 559–579 (FITPGFCGIYVFIFSVFYWFF) threads the bilayer. Topologically, residues 580–598 (KISSSSLATAVLYFGYSLL) are lumenal. Residues 599 to 619 (ISVLVFFLCGSVGFFGAFLFV) traverse the membrane as a helical segment. Residues 620-629 (NKIYASIKID) are Cytoplasmic-facing.

The protein belongs to the nonaspanin (TM9SF) (TC 9.A.2) family.

It is found in the golgi apparatus membrane. Its subcellular location is the vacuole membrane. The polypeptide is Transmembrane 9 superfamily protein C1105.08 (Schizosaccharomyces pombe (strain 972 / ATCC 24843) (Fission yeast)).